Reading from the N-terminus, the 330-residue chain is GTPase Obg (330 aa).

One can recognise an Obg domain in the interval 1-159 (MNFIDEVKIC…MWIHLSLKLL (159 aa)). Residues 160–327 (SDVGLVGLPN…IVKLALKTIK (168 aa)) enclose the OBG-type G domain. GTP contacts are provided by residues 166 to 173 (GLPNAGKS), 191 to 195 (FTTLV), 212 to 215 (DIPG), 279 to 282 (NKCD), and 308 to 310 (STY). The Mg(2+) site is built by Ser-173 and Thr-193.

Belongs to the TRAFAC class OBG-HflX-like GTPase superfamily. OBG GTPase family. In terms of assembly, monomer. The cofactor is Mg(2+).

The protein localises to the cytoplasm. In terms of biological role, an essential GTPase which binds GTP, GDP and possibly (p)ppGpp with moderate affinity, with high nucleotide exchange rates and a fairly low GTP hydrolysis rate. Plays a role in control of the cell cycle, stress response, ribosome biogenesis and in those bacteria that undergo differentiation, in morphogenesis control. This Rickettsia felis (strain ATCC VR-1525 / URRWXCal2) (Rickettsia azadi) protein is GTPase Obg.